Here is a 356-residue protein sequence, read N- to C-terminus: Protein MGF 360-10L (356 aa).

Residues 58–90 (DLNTALMIAAKENNYQLIKLFTEWGANINYGYI) form an ANK repeat. A glycan (N-linked (GlcNAc...) asparagine; by host) is linked at Asn125. Helical transmembrane passes span 206 to 228 (LNTW…YLYE) and 249 to 271 (NFLT…LAAI). A glycan (N-linked (GlcNAc...) asparagine; by host) is linked at Asn352.

This sequence belongs to the asfivirus MGF 360 family.

The protein resides in the host membrane. Functionally, plays a role in virus cell tropism, and may be required for efficient virus replication in macrophages. In Ornithodoros (relapsing fever ticks), this protein is Protein MGF 360-10L.